The primary structure comprises 447 residues: F-box only protein 5 (447 aa).

Residues Ser-94 and Ser-102 each carry the phosphoserine modification. Residues Ala-135–Val-244 are interaction with EVI5. The 47-residue stretch at Leu-250 to Ser-296 folds into the F-box domain. Residues Thr-261–Lys-339 are sufficient for interaction with RPS6KA2; Prevents association of CDC20 with RPS6KA2. Residues Thr-261–Cys-409 are requires for efficient binding to CDC20. Residues Asn-305–Leu-447 form an inhibits APC ubiquitin ligase activity region. The segment at Arg-322 to Leu-325 is competitively blocks access of APC substrates to the D-box coreceptor formed by FZR1 and ANAPC10. Residues Leu-337–Arg-358 are disordered. The span at Thr-343–Ser-357 shows a compositional bias: polar residues. Residues Ser-374–Gly-422 form a ZBR-type zinc finger. Zn(2+)-binding residues include Cys-378, Cys-381, Cys-396, Cys-401, Cys-406, Cys-409, His-414, and Cys-419. Residues Cys-378–Ser-420 are allows a rapid multiple mono-ubiquitination of the APC substrate, but strongly inhibits the slow ubiquitin chain elongation catalyzed by UBCH10. The interval Thr-437–Leu-447 is sufficient to suppress UBE2S activity; essential for interaction with UBE2S; competitively inhibits the rapide ubiquitin chain elongation by UBE2D1 which blocks UBE2D1 with APC; indispensable for recruitment and position of FBXO5 to the catalytic site of APC; abrogates the inhibition of ubiquitin chain assembly primarily catalyzed by UBE2S; inhibits the ubiquitination by either UBE2C or UBE2D1.

As to quaternary structure, part of a SCF (SKP1-cullin-F-box) protein ligase complex. Interacts with BTRC; mediates proteolysis by the SCF ubiquitin ligase complex leading to activation of APC in late mitosis and subsequent mitotic progression. Interacts with FZR1/CDH1 and the N-terminal substrate-binding domain of CDC20; prevents APC activation. Also interacts with EVI5 which blocks its phosphorylation by PLK1 and prevents its subsequent binding to BTRC and degradation. Interacts simultaneously with anaphase promoting complex (APC), through at least ANAPC2, CDC23, CDC27, the APC substrate GMNN and the APC activator FZR1. Interacts with UBE2S; interferes with the activity of UBE2S mainly by disrupting the dynamic electrostatic association between the C-terminal tail of UBE2S and ANAPC2. Interacts with RPS6KA2; cooperates to induce the metaphase arrest of early blastomeres; increases and stabilizes interaction of FBXO5 with CDC20. In terms of processing, phosphorylation by CDK2 and subsequently by PLK1 triggers degradation during early mitosis through ubiquitin-mediated proteolysis by the SCF ubiquitin ligase complex containing the F-box protein BTRC. This degradation is necessary for the activation of APC in late mitosis and subsequent mitotic progression. Phosphorylated by RPS6KA2; increases and stabilizes interaction with CDC20. Ubiquitinated by the SCF(BTRC) complex following phosphorylation by PLK1. Undergoes both 'Lys-11' and 'Lys-48'-linked polyubiquitination by APC-FZR1 complex leading to degradation by proteasome during G1 phase. Degraded through the SCF(BTRC) complex; degradation occurs during oocyte maturation, between germinal vesicle breakdown (GVBD) and meiosis I, and is required for the meiosis I-meiosis II transition.

Its subcellular location is the nucleus. The protein resides in the cytoplasm. The protein localises to the cytoskeleton. It is found in the spindle. It functions in the pathway protein modification; protein ubiquitination. Functionally, regulator of APC activity during mitotic and meiotic cell cycle. During mitotic cell cycle plays a role as both substrate and inhibitor of APC-FZR1 complex. During G1 phase, plays a role as substrate of APC-FZR1 complex E3 ligase. Then switches as an inhibitor of APC-FZR1 complex during S and G2 leading to cell-cycle commitment. As APC inhibitor, prevents the degradation of APC substrates at multiple levels: by interacting with APC and blocking access of APC substrates to the D-box coreceptor, formed by FZR1 and ANAPC10; by suppressing ubiquitin ligation and chain elongation by APC by preventing the UBE2C and UBE2S activities. Plays a role in genome integrity preservation by coordinating DNA replication with mitosis through APC inhibition in interphase to stabilize CCNA2 and GMNN in order to promote mitosis and prevent rereplication and DNA damage-induced cellular senescence. During oocyte maturation, plays a role in meiosis through inactivation of APC-FZR1 complex. Inhibits APC through RPS6KA2 interaction that increases FBXO5 affiniy for CDC20 leading to the metaphase arrest of the second meiotic division before fertilization. Controls entry into the first meiotic division through inactivation of APC-FZR1 complex. Promotes migration and osteogenic differentiation of mesenchymal stem cells. This Homo sapiens (Human) protein is F-box only protein 5.